The sequence spans 127 residues: Evasin P467 (127 aa).

A signal peptide spans Met-1–Gly-21. Disulfide bonds link Cys-42/Cys-63, Cys-59/Cys-100, Cys-76/Cys-105, and Cys-95/Cys-114. Residues Asn-49 and Asn-94 are each glycosylated (N-linked (GlcNAc...) asparagine).

Its subcellular location is the secreted. In terms of biological role, salivary chemokine-binding protein which binds to host chemokines CCL1, CCL2, CCL3 and CCL5. The chain is Evasin P467 from Rhipicephalus pulchellus (Yellow backed tick).